The following is a 643-amino-acid chain: Fructose-1,6-bisphosphatase class 3 (643 aa).

Belongs to the FBPase class 3 family. It depends on Mn(2+) as a cofactor.

It catalyses the reaction beta-D-fructose 1,6-bisphosphate + H2O = beta-D-fructose 6-phosphate + phosphate. It functions in the pathway carbohydrate biosynthesis; gluconeogenesis. In Lacticaseibacillus paracasei (strain ATCC 334 / BCRC 17002 / CCUG 31169 / CIP 107868 / KCTC 3260 / NRRL B-441) (Lactobacillus paracasei), this protein is Fructose-1,6-bisphosphatase class 3.